The chain runs to 802 residues: Ras GTPase-activating protein 4 (802 aa).

C2 domains are found at residues 1–105 and 116–232; these read MAKR…SGWT and VQGE…EGWF. Residues Asp21, Asp27, Asp74, Asp76, Ser79, Asp82, Asp149, Asp155, Asp202, Asp204, Ser207, and Asp210 each contribute to the Ca(2+) site. Residues 317 to 545 enclose the Ras-GAP domain; that stretch reads GLAKDFLDLL…AQLKDFIMKL (229 aa). Residues 565–672 enclose the PH domain; that stretch reads PPVKEGPLFI…WLSALRKAST (108 aa). The segment at 674 to 710 adopts a Btk-type zinc-finger fold; it reads NRGLLRSYHPGIFRGDKWSCCHQKDKTDQGCDKTHSR. The Zn(2+) site is built by His682, Cys693, Cys694, and Cys704.

Ca(2+) is required as a cofactor. Isoform 2 is expressed in osteoblasts.

It is found in the cytoplasm. Its subcellular location is the cytosol. The protein localises to the cell membrane. Its function is as follows. Ca(2+)-dependent Ras GTPase-activating protein, that switches off the Ras-MAPK pathway following a stimulus that elevates intracellular calcium. Functions as an adaptor for Cdc42 and Rac1 during FcR-mediated phagocytosis. Isoform 2 activates the Ras pathway and promotes RANKL shedding by modulating the expression of MMP14. The protein is Ras GTPase-activating protein 4 (Rasa4) of Mus musculus (Mouse).